The primary structure comprises 38 residues: Large ribosomal subunit protein bL36 (38 aa).

It belongs to the bacterial ribosomal protein bL36 family.

The protein is Large ribosomal subunit protein bL36 of Baumannia cicadellinicola subsp. Homalodisca coagulata.